The following is an 82-amino-acid chain: Putative membrane protein insertion efficiency factor (82 aa).

The protein belongs to the UPF0161 family.

Its subcellular location is the cell inner membrane. Could be involved in insertion of integral membrane proteins into the membrane. In Colwellia psychrerythraea (strain 34H / ATCC BAA-681) (Vibrio psychroerythus), this protein is Putative membrane protein insertion efficiency factor.